Here is a 332-residue protein sequence, read N- to C-terminus: MNIKIVVLVIFAILLGSALAWHGSKHHNPTKAPTEAPHRGGGGGGGHNTPAPTQPPRQNTPAPTFQALNVWFFFWLLLLARAPLTYVHITATSSEPIKLLVPLYVYPGAAWDSVANAAKTGVKIIAIINPNSGPASSGPDSSYTTYMNKLTAAGVDMVGYVHTSYGARAVGDVNADIDTYASKYPGLKGIFLDEASASASEISYYTNVYNHIKSKSGYVNSILNPGTQPDQGYLAISSNIVIFEDAGSNLKNNYASWVKCAPSASQKSGYKYKFSGIAHSTSSGSMSGIINTMVSVLAMGLVYVTDGAAGCCTYNTLTSYLSQEASAVHALN.

The N-terminal stretch at 1-22 (MNIKIVVLVIFAILLGSALAWH) is a signal peptide. The disordered stretch occupies residues 26-60 (HHNPTKAPTEAPHRGGGGGGGHNTPAPTQPPRQNT).

The chain is Spherulin-4 from Physarum polycephalum (Slime mold).